Here is a 244-residue protein sequence, read N- to C-terminus: Methylthioribulose-1-phosphate dehydratase (244 aa).

C104 contacts substrate. Residues H122 and H124 each coordinate Zn(2+). The active-site Proton donor/acceptor is the E148. H204 is a binding site for Zn(2+).

This sequence belongs to the aldolase class II family. MtnB subfamily. Zn(2+) serves as cofactor.

The protein localises to the cytoplasm. The enzyme catalyses 5-(methylsulfanyl)-D-ribulose 1-phosphate = 5-methylsulfanyl-2,3-dioxopentyl phosphate + H2O. It functions in the pathway amino-acid biosynthesis; L-methionine biosynthesis via salvage pathway; L-methionine from S-methyl-5-thio-alpha-D-ribose 1-phosphate: step 2/6. In terms of biological role, catalyzes the dehydration of methylthioribulose-1-phosphate (MTRu-1-P) into 2,3-diketo-5-methylthiopentyl-1-phosphate (DK-MTP-1-P). The protein is Methylthioribulose-1-phosphate dehydratase of Cryptococcus neoformans var. neoformans serotype D (strain B-3501A) (Filobasidiella neoformans).